The chain runs to 418 residues: RuvB-like helicase 2 (418 aa).

65 to 72 (GDRGSGKT) contributes to the ATP binding site.

The protein belongs to the RuvB family. As to quaternary structure, component of the SWR1 chromatin remodeling complex, the INO80 chromatin remodeling complex, and of the R2TP complex.

Its subcellular location is the nucleus. The enzyme catalyses ATP + H2O = ADP + phosphate + H(+). In terms of biological role, DNA helicase which participates in several chromatin remodeling complexes, including the SWR1 and the INO80 complexes. The SWR1 complex mediates the ATP-dependent exchange of histone H2A for the H2A variant HZT1 leading to transcriptional regulation of selected genes by chromatin remodeling. The INO80 complex remodels chromatin by shifting nucleosomes and is involved in DNA repair. Also involved in pre-rRNA processing. The protein is RuvB-like helicase 2 (RVB2) of Encephalitozoon cuniculi (strain GB-M1) (Microsporidian parasite).